The following is a 157-amino-acid chain: Transcription elongation factor GreA (157 aa).

The protein belongs to the GreA/GreB family.

Its function is as follows. Necessary for efficient RNA polymerase transcription elongation past template-encoded arresting sites. The arresting sites in DNA have the property of trapping a certain fraction of elongating RNA polymerases that pass through, resulting in locked ternary complexes. Cleavage of the nascent transcript by cleavage factors such as GreA or GreB allows the resumption of elongation from the new 3'terminus. GreA releases sequences of 2 to 3 nucleotides. The chain is Transcription elongation factor GreA from Phenylobacterium zucineum (strain HLK1).